We begin with the raw amino-acid sequence, 781 residues long: Acyl-CoA dehydrogenase family member 11 (781 aa).

N6-acetyllysine is present on Lys-177. Tyr-325 carries the phosphotyrosine modification. N6-succinyllysine is present on Lys-392. Residues 505–515 (FCMTEPDVASS), 513–515 (ASS), 539–541 (WSS), and Ser-541 contribute to the FAD site. Position 515 (Ser-515) interacts with substrate. 630-633 (GPGR) is a substrate binding site. Residues Arg-658, Gln-728, and 728-732 (QVCGG) each bind FAD. Gly-756 contacts substrate. Residues 757 to 759 (PDE) and Glu-759 each bind FAD.

Belongs to the acyl-CoA dehydrogenase family. Homodimer. The cofactor is FAD.

It localises to the peroxisome. It is found in the mitochondrion membrane. The enzyme catalyses a 2,3-saturated acyl-CoA + oxidized [electron-transfer flavoprotein] + H(+) = a (2E)-enoyl-CoA + reduced [electron-transfer flavoprotein]. The catalysed reaction is docosanoyl-CoA + oxidized [electron-transfer flavoprotein] + H(+) = (2E)-docosenoyl-CoA + reduced [electron-transfer flavoprotein]. It catalyses the reaction tetracosanoyl-CoA + oxidized [electron-transfer flavoprotein] + H(+) = (2E)-tetracosenoyl-CoA + reduced [electron-transfer flavoprotein]. It carries out the reaction eicosanoyl-CoA + oxidized [electron-transfer flavoprotein] + H(+) = (2E)-eicosenoyl-CoA + reduced [electron-transfer flavoprotein]. The enzyme catalyses hexacosanoyl-CoA + oxidized [electron-transfer flavoprotein] + H(+) = (2E)-hexacosenoyl-CoA + reduced [electron-transfer flavoprotein]. The catalysed reaction is tricosanoyl-CoA + oxidized [electron-transfer flavoprotein] + H(+) = (2E)-tricosenoyl-CoA + reduced [electron-transfer flavoprotein]. It participates in lipid metabolism; fatty acid beta-oxidation. Its function is as follows. Acyl-CoA dehydrogenase, that exhibits maximal activity towards saturated C22-CoA. Probably participates in beta-oxydation and energy production but could also play a role in the metabolism of specific fatty acids to control fatty acids composition of cellular lipids in brain. This is Acyl-CoA dehydrogenase family member 11 (ACAD11) from Pongo abelii (Sumatran orangutan).